The sequence spans 408 residues: MSWDQVWIDVNIATMDPEISAPYGAITDAAIAVKEGKIAWMGPRSELPEFDVLSTPVYRGKGGWLTPGLIDAHTHLVFAGNRANEFELRLQGASYEEIARAGGGIISTVKACREASEAELFELGRQRLNALAKEGVTTVEIKSGYGLDTETELKLLRVARELGKHHHVDVKTTFLGAHAIPPEYKDNSDAYVDLVIDEMLTAVINENLADAVDVFCENIAFSLEQTERVLSTAKAAGLDIKLHAEQLSNLGGSAMAAKLGAKSVDHIEYLDEVGVKALSESGTCATLLPGAFYFLRETQMPPIDLLRQYEVPMVLASDYNPGSSPLCSSLLMLNMGCTLFRLTPEEALAGMTRNAAKALGVEDSVGVLKPGMQADFCLWDITTPAALAYSYGVDVCKEVVKNGKLVHQ.

2 residues coordinate Fe(3+): His73 and His75. Zn(2+) contacts are provided by His73 and His75. Arg82, Tyr145, and His178 together coordinate 4-imidazolone-5-propanoate. Tyr145 is an N-formimidoyl-L-glutamate binding site. Residue His243 participates in Fe(3+) binding. His243 is a binding site for Zn(2+). Position 246 (Gln246) interacts with 4-imidazolone-5-propanoate. Asp318 lines the Fe(3+) pocket. Asp318 lines the Zn(2+) pocket. N-formimidoyl-L-glutamate is bound by residues Asn320 and Gly322. Ser323 is a 4-imidazolone-5-propanoate binding site.

The protein belongs to the metallo-dependent hydrolases superfamily. HutI family. Zn(2+) serves as cofactor. Requires Fe(3+) as cofactor.

It localises to the cytoplasm. The enzyme catalyses 4-imidazolone-5-propanoate + H2O = N-formimidoyl-L-glutamate. Its pathway is amino-acid degradation; L-histidine degradation into L-glutamate; N-formimidoyl-L-glutamate from L-histidine: step 3/3. Its function is as follows. Catalyzes the hydrolytic cleavage of the carbon-nitrogen bond in imidazolone-5-propanoate to yield N-formimidoyl-L-glutamate. It is the third step in the universal histidine degradation pathway. In Shewanella loihica (strain ATCC BAA-1088 / PV-4), this protein is Imidazolonepropionase.